Here is a 196-residue protein sequence, read N- to C-terminus: Probable nicotinate-nucleotide adenylyltransferase (196 aa).

Belongs to the NadD family.

The catalysed reaction is nicotinate beta-D-ribonucleotide + ATP + H(+) = deamido-NAD(+) + diphosphate. It participates in cofactor biosynthesis; NAD(+) biosynthesis; deamido-NAD(+) from nicotinate D-ribonucleotide: step 1/1. Catalyzes the reversible adenylation of nicotinate mononucleotide (NaMN) to nicotinic acid adenine dinucleotide (NaAD). The polypeptide is Probable nicotinate-nucleotide adenylyltransferase (Thermotoga sp. (strain RQ2)).